Consider the following 307-residue polypeptide: Transcription initiation factor IIF subunit beta (307 aa).

The segment covering 1–12 (MSEEKPTVRTEE) has biased composition (basic and acidic residues). Disordered regions lie at residues 1-22 (MSEEKPTVRTEEDDRYEDDAGD) and 261-307 (VELR…IDVV). The span at 13–22 (DDRYEDDAGD) shows a compositional bias: acidic residues. The span at 263–290 (LRNQQASQSESSSIDHTGKNTSPDNPGT) shows a compositional bias: polar residues. Residues 292-307 (AEEDEDDDGVEMIDVV) are compositionally biased toward acidic residues.

The protein belongs to the TFIIF beta subunit family. Component of the fcp1/TFIIF/polII complex via interaction of tfg3 with both tfg1/TFIIF-alpha and tfg2/TFIIF-beta subunits.

It is found in the nucleus. In terms of biological role, TFIIF is a general transcription initiation factor that binds to RNA polymerase II and helps to recruit it to the initiation complex in collaboration with TFIIB. It promotes transcription elongation. The chain is Transcription initiation factor IIF subunit beta (tfg2) from Schizosaccharomyces pombe (strain 972 / ATCC 24843) (Fission yeast).